The following is a 518-amino-acid chain: MGVFRFISISLAAVSAANAAQILSMPHAQTVPNSYIVMMKDDTSDDDFNHHQSWLQSTHTHNITRRATIQNAGMRHKYNFSKMKGYSGIFDEETIKDIAKDPKVMFVEPDTIISVHGKVEQSNVPSWGLARISNPQPGAGSYIYDSSAGEGITVYSVDTGVDVNHEDFEGRAIWGSNQVNDGDDRDGSGHGTHTSGTMVGKEFGIAKKAKLVAVKVLGNDGSGPTSGIVAGINWSVEHARQNGGTKKAVMNMSLGGSSSSALNRAAAQAVEQGMFLSVAAGNDNQDAQSSSPASEPSVCTVGSSAEDDSRSSFSNWGPAIDLFAPGSNIISARPGGGSQSMSGTSMAAPHVAGLAAYLMALEGISGGAVCDRLKELGTSSITDAGPGTPTNVLINNGGAKGGKPNPNPAPSPSPSPSQPSEPQQPTPSQPGQPGEPFPGEPQQPTPSQPGQPGEPFPGEPFPGEPFPGEPFPGESAPAPAPQHPHTPYPGGDNFDFDGFWKKYFGGEHWRKMFSSFWN.

Positions 1–19 are cleaved as a signal peptide; sequence MGVFRFISISLAAVSAANA. Residues 20-116 constitute a propeptide that is removed on maturation; the sequence is AQILSMPHAQ…VEPDTIISVH (97 aa). An Inhibitor I9 domain is found at 34-115; the sequence is SYIVMMKDDT…FVEPDTIISV (82 aa). In terms of domain architecture, Peptidase S8 spans 126–400; sequence SWGLARISNP…NVLINNGGAK (275 aa). Active-site charge relay system residues include D158 and H190. Positions 175-198 are disordered; sequence GSNQVNDGDDRDGSGHGTHTSGTM. N-linked (GlcNAc...) asparagine glycans are attached at residues N233 and N251. Residues 282-294 show a composition bias toward polar residues; the sequence is NDNQDAQSSSPAS. The disordered stretch occupies residues 282–312; it reads NDNQDAQSSSPASEPSVCTVGSSAEDDSRSS. S345 (charge relay system) is an active-site residue. Residues 378–394 show a composition bias toward polar residues; the sequence is TSSITDAGPGTPTNVLI. A disordered region spans residues 378–496; the sequence is TSSITDAGPG…PYPGGDNFDF (119 aa). 2 stretches are compositionally biased toward pro residues: residues 405-470 and 478-487; these read NPNP…PGEP and APAPQHPHTP.

The protein belongs to the peptidase S8 family.

It localises to the secreted. Secreted subtilisin-like serine protease with keratinolytic activity that contributes to pathogenicity. In Trichophyton verrucosum (strain HKI 0517), this protein is Subtilisin-like protease 1 (SUB1).